The sequence spans 469 residues: tRNA-2-methylthio-N(6)-dimethylallyladenosine synthase (469 aa).

An MTTase N-terminal domain is found at 27–142; the sequence is KKVYIRTFGC…LPQMLAQRAR (116 aa). Positions 36, 73, 105, 179, 183, and 186 each coordinate [4Fe-4S] cluster. In terms of domain architecture, Radical SAM core spans 165–398; the sequence is KVDGAAAFVS…QATIEDNVRR (234 aa). Residues 401-467 form the TRAM domain; that stretch reads ERRVGTVQRV…PHSLRGEPVL (67 aa).

It belongs to the methylthiotransferase family. MiaB subfamily. As to quaternary structure, monomer. It depends on [4Fe-4S] cluster as a cofactor.

The protein resides in the cytoplasm. The catalysed reaction is N(6)-dimethylallyladenosine(37) in tRNA + (sulfur carrier)-SH + AH2 + 2 S-adenosyl-L-methionine = 2-methylsulfanyl-N(6)-dimethylallyladenosine(37) in tRNA + (sulfur carrier)-H + 5'-deoxyadenosine + L-methionine + A + S-adenosyl-L-homocysteine + 2 H(+). Its function is as follows. Catalyzes the methylthiolation of N6-(dimethylallyl)adenosine (i(6)A), leading to the formation of 2-methylthio-N6-(dimethylallyl)adenosine (ms(2)i(6)A) at position 37 in tRNAs that read codons beginning with uridine. The sequence is that of tRNA-2-methylthio-N(6)-dimethylallyladenosine synthase from Leptothrix cholodnii (strain ATCC 51168 / LMG 8142 / SP-6) (Leptothrix discophora (strain SP-6)).